Reading from the N-terminus, the 305-residue chain is Transmembrane epididymal protein 1 (305 aa).

Residues 4–24 (FIGHISPGLFLVFYGLYQAII) traverse the membrane as a helical segment. Residue Asn32 is glycosylated (N-linked (GlcNAc...) asparagine). A run of 6 helical transmembrane segments spans residues 51 to 71 (LWQIAHAGWLKVVSGSLLIVY), 100 to 120 (LTMFILLTLDGCVEVVSRSVL), 124 to 144 (LVLLERGATVLGVYVLLLLLV), 159 to 179 (SLLILVVFLLMLVLTAELWAP), 187 to 207 (IETFLFLTMGSWLMQAAFILF), and 223 to 243 (IMLVTTFFCWHVMINALCMLG). Positions 285-305 (EQQDRDDQAPLLSKSSPCDRA) are disordered.

It belongs to the TMEM45 family.

It is found in the membrane. This is Transmembrane epididymal protein 1 (Teddm1) from Rattus norvegicus (Rat).